Here is an 89-residue protein sequence, read N- to C-terminus: Small ribosomal subunit protein uS15 (89 aa).

Belongs to the universal ribosomal protein uS15 family. As to quaternary structure, part of the 30S ribosomal subunit. Forms a bridge to the 50S subunit in the 70S ribosome, contacting the 23S rRNA.

Its function is as follows. One of the primary rRNA binding proteins, it binds directly to 16S rRNA where it helps nucleate assembly of the platform of the 30S subunit by binding and bridging several RNA helices of the 16S rRNA. Forms an intersubunit bridge (bridge B4) with the 23S rRNA of the 50S subunit in the ribosome. The chain is Small ribosomal subunit protein uS15 from Lactobacillus johnsonii (strain CNCM I-12250 / La1 / NCC 533).